The following is a 594-amino-acid chain: Neuronal PAS domain-containing protein 1 (594 aa).

The 54-residue stretch at 45 to 98 (QRKEKSRNAARWRRGKENLEFFELAKLLPLPGAISSQLDKASIVRLSVTYLRLR) folds into the bHLH domain. The 71-residue stretch at 135 to 205 (EQHLGGHILQ…EQLGLRAASI (71 aa)) folds into the PAS 1 domain. Residues 206 to 237 (GPPTPPSVSSSSSSSSSSLVDTPEIEASPTEA) form a disordered region. Residues 212-223 (SVSSSSSSSSSS) are compositionally biased toward low complexity. The 67-residue stretch at 294-360 (APLAELPLHG…IRQSHLDLLD (67 aa)) folds into the PAS 2 domain. Residues 366–409 (TGYYRWLQRAGGFVWLQSVATVAGNGKSTGEHHVLWVSHVLSNA) form the PAC domain. The disordered stretch occupies residues 427–498 (QEEPSRPGPE…DPPAPPRPEF (72 aa)). Positions 453–480 (DQDKDKDPQARGKRIKVEASPKEARGSE) are enriched in basic and acidic residues.

In terms of assembly, efficient DNA binding requires dimerization with another bHLH protein. Interacts with ARNT; forms a heterodimer that binds core DNA sequence 5'-[AG]CGTG-3' within the hypoxia response element (HRE) leading to a transcriptional repressor on its target gene TH. In terms of tissue distribution, expressed in brain in inhibitory interneurons. Also found in spinal cord.

It localises to the nucleus. In terms of biological role, may control regulatory pathways relevant to schizophrenia and to psychotic illness. May play a role in late central nervous system development by modulating EPO expression in response to cellular oxygen level. Forms a heterodimer that binds core DNA sequence 5'-TACGTG-3' within the hypoxia response element (HRE) leading to transcriptional repression on its target gene TH. The polypeptide is Neuronal PAS domain-containing protein 1 (Npas1) (Mus musculus (Mouse)).